The chain runs to 84 residues: Alpha-mammal toxin Aah3 (84 aa).

Positions 1-19 (MNYLVMISLALLLMTGVES) are cleaved as a signal peptide. The LCN-type CS-alpha/beta domain occupies 21–82 (RDGYIVDSKN…PIKDPSYKCH (62 aa)). 4 cysteine pairs are disulfide-bonded: cysteine 31-cysteine 81, cysteine 35-cysteine 53, cysteine 39-cysteine 63, and cysteine 43-cysteine 65. Arginine 84 is a propeptide (removed by a carboxypeptidase).

Belongs to the long (4 C-C) scorpion toxin superfamily. Sodium channel inhibitor family. Alpha subfamily. As to expression, expressed by the venom gland.

It is found in the secreted. Its function is as follows. Alpha toxins bind voltage-independently at site-3 of sodium channels (Nav) and inhibit the inactivation of the activated channels, thereby blocking neuronal transmission. The polypeptide is Alpha-mammal toxin Aah3 (Androctonus australis (Sahara scorpion)).